A 664-amino-acid chain; its full sequence is L-type lectin-domain containing receptor kinase I.3 (664 aa).

An N-terminal signal peptide occupies residues 1–21 (MACRLYLALIFSCVYLICLSS). Residues 22-286 (QQETGFVYNG…PKEEKKKLSP (265 aa)) are Extracellular-facing. The interval 24 to 257 (ETGFVYNGFE…NHYILGWSFS (234 aa)) is legume-lectin like. N-linked (GlcNAc...) asparagine glycosylation is found at N55, N125, N128, N181, N204, N225, and N267. Residues 287 to 307 (LLIGLVILLVIPVVMVLGGVY) traverse the membrane as a helical segment. The Cytoplasmic segment spans residues 308–664 (WYRRKKYAEV…THTILDGHGR (357 aa)). Positions 342–619 (FRKDCRVGKG…LNQDLPLPIF (278 aa)) constitute a Protein kinase domain. ATP contacts are provided by residues 348–356 (VGKGGFGEV) and K370. D466 (proton acceptor) is an active-site residue.

The protein in the C-terminal section; belongs to the protein kinase superfamily. Ser/Thr protein kinase family. This sequence in the N-terminal section; belongs to the leguminous lectin family. In terms of processing, autophosphorylated on Ser and Thr residues. Mostly expressed in roots and flowers, and, to a lower extent, in leaves.

It is found in the cell membrane. It catalyses the reaction L-seryl-[protein] + ATP = O-phospho-L-seryl-[protein] + ADP + H(+). The catalysed reaction is L-threonyl-[protein] + ATP = O-phospho-L-threonyl-[protein] + ADP + H(+). In terms of biological role, involved in resistance response to the pathogenic fungus Alternaria brassicicola. The protein is L-type lectin-domain containing receptor kinase I.3 of Arabidopsis thaliana (Mouse-ear cress).